The primary structure comprises 457 residues: Methylphosphonate synthase (457 aa).

Residues 23–74 (ILNDIKRRPEDAANELGVSIEEINSIISGKQKISPSLIEKAVNIWPVNERDF) enclose the HTH cro/C1-type 1 domain. Positions 32 to 50 (EDAANELGVSIEEINSIIS) form a DNA-binding region, H-T-H motif. Residues His148 and His190 each contribute to the Fe cation site. Residues 247 to 301 (LEYYFELSNLTKEKFAKRTNFSMETLADFFTKKKLPTFDELKIIAKALNVNSRDL) form the HTH cro/C1-type 2 domain. The segment at residues 258 to 277 (KEKFAKRTNFSMETLADFFT) is a DNA-binding region (H-T-H motif).

The protein belongs to the non-heme iron-dependent dioxygenase family. It depends on Fe(2+) as a cofactor.

It catalyses the reaction 2-hydroxyethylphosphonate + O2 = methylphosphonate + hydrogencarbonate + H(+). It functions in the pathway phosphorus metabolism; phosphonate biosynthesis. In terms of biological role, catalyzes the conversion of 2-hydroxyethylphosphonate into methylphosphonate in the methylphosphonate biosynthesis pathway. This is Methylphosphonate synthase (mpnS) from Nitrosopumilus maritimus (strain SCM1).